The primary structure comprises 342 residues: N-acetyl-gamma-glutamyl-phosphate reductase (342 aa).

Cys149 is a catalytic residue.

It belongs to the NAGSA dehydrogenase family. Type 1 subfamily.

It is found in the cytoplasm. It catalyses the reaction N-acetyl-L-glutamate 5-semialdehyde + phosphate + NADP(+) = N-acetyl-L-glutamyl 5-phosphate + NADPH + H(+). Its pathway is amino-acid biosynthesis; L-arginine biosynthesis; N(2)-acetyl-L-ornithine from L-glutamate: step 3/4. Catalyzes the NADPH-dependent reduction of N-acetyl-5-glutamyl phosphate to yield N-acetyl-L-glutamate 5-semialdehyde. The protein is N-acetyl-gamma-glutamyl-phosphate reductase of Cereibacter sphaeroides (strain ATCC 17025 / ATH 2.4.3) (Rhodobacter sphaeroides).